A 200-amino-acid polypeptide reads, in one-letter code: Small ribosomal subunit protein uS4 (200 aa).

A disordered region spans residues 22-43 (TGKELERRPYAPGQHGPTQRKK). The 79-residue stretch at 92 to 170 (QRLDNIVYRL…VPEYVTFDAE (79 aa)) folds into the S4 RNA-binding domain.

The protein belongs to the universal ribosomal protein uS4 family. In terms of assembly, part of the 30S ribosomal subunit. Contacts protein S5. The interaction surface between S4 and S5 is involved in control of translational fidelity.

In terms of biological role, one of the primary rRNA binding proteins, it binds directly to 16S rRNA where it nucleates assembly of the body of the 30S subunit. Its function is as follows. With S5 and S12 plays an important role in translational accuracy. The chain is Small ribosomal subunit protein uS4 from Listeria monocytogenes serotype 4b (strain F2365).